Here is a 441-residue protein sequence, read N- to C-terminus: MGGPRAWALLCLGLLLPGGGAAWSIGAAPFSGRRNWCSYVVTRTISCHVQNGTYLQRVLQNCPWPMSCPGSSYRTVVRPTYKVMYKIVTAREWRCCPGHSGVSCEEASSASLEPMWSGSTMRRMALRPTAFSGCLNCSKVSELTERLKVLEAKMTMLTVIEQPVPPTPATPEDPAPLWGPPPAQGSPGDGGLQDQVGAWGLPGPTGPKGDAGSRGPMGMRGPPGPQGPPGSPGRAGAVGTPGERGPPGPPGPPGPPGPPAPVGPPHARISQHGDPLLSNTFTETNNHWPQGPTGPPGPPGPMGPPGPPGPTGVPGSPGHIGPPGPTGPKGISGHPGEKGERGLRGEPGPQGSAGQRGEPGPKGDPGEKSHWGEGLHQLREALKILAERVLILETMIGLYEPELGSGAGPAGTGTPSLLRGKRGGHATNYRIVAPRSRDERG.

Positions M1–A22 are cleaved as a signal peptide. An EMI domain is found at R33 to E106. 3 cysteine pairs are disulfide-bonded: C37-C96, C62-C68, and C95-C104. The O-linked (Fuc) threonine glycan is linked to T42. N-linked (GlcNAc...) asparagine glycosylation occurs at N51. The N-linked (GlcNAc...) asparagine glycan is linked to N136. Disordered regions lie at residues Q162–W371 and S405–G441. 2 stretches are compositionally biased toward pro residues: residues P163 to Q184 and P222 to S231. The 190-residue stretch at G179–K368 folds into the Collagen-like domain. Positions P232–E243 are enriched in low complexity. A compositionally biased stretch (pro residues) spans R244–P264. Positions L277–W288 are enriched in polar residues. Residues P292–T311 are compositionally biased toward pro residues. 2 stretches are compositionally biased toward basic and acidic residues: residues P335 to R344 and P359 to W371.

In terms of assembly, homo- or heteromers. Post-translationally, O-fucosylated at Thr-42 within the EMI domain by FUT10/POFUT3 and FUT11/POFUT4.

Its subcellular location is the secreted. The protein resides in the extracellular space. It localises to the extracellular matrix. The chain is EMI domain-containing protein 1 (EMID1) from Homo sapiens (Human).